A 259-amino-acid chain; its full sequence is Deoxyribose-phosphate aldolase (259 aa).

D104 acts as the Proton donor/acceptor in catalysis. K168 serves as the catalytic Schiff-base intermediate with acetaldehyde. The Proton donor/acceptor role is filled by K200.

The protein belongs to the DeoC/FbaB aldolase family. DeoC type 2 subfamily.

Its subcellular location is the cytoplasm. The catalysed reaction is 2-deoxy-D-ribose 5-phosphate = D-glyceraldehyde 3-phosphate + acetaldehyde. It functions in the pathway carbohydrate degradation; 2-deoxy-D-ribose 1-phosphate degradation; D-glyceraldehyde 3-phosphate and acetaldehyde from 2-deoxy-alpha-D-ribose 1-phosphate: step 2/2. In terms of biological role, catalyzes a reversible aldol reaction between acetaldehyde and D-glyceraldehyde 3-phosphate to generate 2-deoxy-D-ribose 5-phosphate. The sequence is that of Deoxyribose-phosphate aldolase from Agrobacterium fabrum (strain C58 / ATCC 33970) (Agrobacterium tumefaciens (strain C58)).